A 325-amino-acid chain; its full sequence is RNA ligase 1 (325 aa).

The cofactor is Mg(2+). Mn(2+) serves as cofactor. AMPylates itself (auto-AMPylation).

The enzyme catalyses ATP + (ribonucleotide)n-3'-hydroxyl + 5'-phospho-(ribonucleotide)m = (ribonucleotide)n+m + AMP + diphosphate.. In terms of biological role, functions as an RNA ligase, in vitro. The ligation reaction entails three nucleotidyl transfer steps. In the first step, the RNA ligase reacts with ATP in the absence of nucleic acid to form a covalent ligase-AMP intermediate and release pyrophosphate. In step 2, the ligase-AMP binds to the nucleic acid and transfers the adenylate to the 5'-PO4 terminus to form an adenylylated intermediate. In step 3, the RNA ligase directs the attack of the 3'-OH on the 5'-phosphoanhydride linkage, resulting in a repaired 3'-5' phosphodiester and release of AMP. Exhibits selectivity for single-stranded RNA substrates and may not have nick-sealing activity on double-stranded DNA-RNA hybrids. May play a role in maintaining RNA integrity under stress conditions, for example in response to reactive oxygen species (ROS). The sequence is that of RNA ligase 1 from Rattus norvegicus (Rat).